Here is a 407-residue protein sequence, read N- to C-terminus: Protein COS9 (407 aa).

3 helical membrane passes run 75–95 (TWLL…IKSI), 98–118 (IFPF…LPNI), and 261–281 (IFNL…YVSW).

It belongs to the DUP/COS family.

It is found in the membrane. This Saccharomyces cerevisiae (strain ATCC 204508 / S288c) (Baker's yeast) protein is Protein COS9 (COS9).